The sequence spans 184 residues: Oocyte-secreted protein 4A (184 aa).

The first 19 residues, 1–19 (MKISCVLGKLLMLFELIHG), serve as a signal peptide directing secretion. Residue asparagine 128 is glycosylated (N-linked (GlcNAc...) asparagine).

This sequence belongs to the PLAC1 family.

The protein localises to the secreted. This chain is Oocyte-secreted protein 4A, found in Homo sapiens (Human).